Here is a 347-residue protein sequence, read N- to C-terminus: Transcription factor JunB (347 aa).

Residues Lys-4, Lys-33, and Lys-36 each participate in a glycyl lysine isopeptide (Lys-Gly) (interchain with G-Cter in SUMO2) cross-link. Positions 51–73 are disordered; the sequence is KAPGARGPGPEGGGGGSYFSGQG. Residues 56–68 show a composition bias toward gly residues; sequence RGPGPEGGGGGSY. Lys-81 participates in a covalent cross-link: Glycyl lysine isopeptide (Lys-Gly) (interchain with G-Cter in SUMO2). 2 positions are modified to phosphothreonine: Thr-102 and Thr-104. A Phosphoserine modification is found at Ser-117. Residue Lys-141 forms a Glycyl lysine isopeptide (Lys-Gly) (interchain with G-Cter in SUMO2) linkage. The segment covering 239–253 has biased composition (basic and acidic residues); the sequence is FKEEPQTVPEARSRD. Residues 239-260 form a disordered region; sequence FKEEPQTVPEARSRDATPPVSP. An N6-acetyllysine; alternate modification is found at Lys-240. A Glycyl lysine isopeptide (Lys-Gly) (interchain with G-Cter in SUMO1); alternate cross-link involves residue Lys-240. Residue Lys-240 forms a Glycyl lysine isopeptide (Lys-Gly) (interchain with G-Cter in SUMO2); alternate linkage. Ser-251 is modified (phosphoserine). Thr-255 is modified (phosphothreonine). Residue Ser-259 is modified to Phosphoserine. The interval 268–295 is basic motif; it reads RIKVERKRLRNRLAATKCRKRKLERIAR. The 64-residue stretch at 268 to 331 folds into the bZIP domain; it reads RIKVERKRLR…AQLKQKVMTH (64 aa). The segment at 296 to 324 is leucine-zipper; that stretch reads LEDKVKTLKAENAGLSSTAGLLREQVAQL. A Glycyl lysine isopeptide (Lys-Gly) (interchain with G-Cter in SUMO2) cross-link involves residue Lys-343.

Belongs to the bZIP family. Jun subfamily. Binds DNA as a homodimer or as a heterodimer with another member of the Jun/Fos family. Component of an AP-1 transcription factor complex composed of JUN-FOS heterodimers composed of JUN-FOS heterodimers. As part of the AP-1 transcription factor complex, forms heterodimers with FOSB, thereby binding to the AP-1 consensus sequence and stimulating transcription. Interacts with ITCH (via its WW domains). Ubiquitinated by ITCH, leading to its degradation.

The protein resides in the nucleus. In terms of biological role, transcription factor involved in regulating gene activity following the primary growth factor response. Binds to the DNA sequence 5'-TGA[GC]TCA-3'. Heterodimerizes with proteins of the FOS family to form an AP-1 transcription complex, thereby enhancing its DNA binding activity to an AP-1 consensus sequence and its transcriptional activity. This is Transcription factor JunB (JUNB) from Homo sapiens (Human).